A 92-amino-acid polypeptide reads, in one-letter code: Large ribosomal subunit protein eL43 (92 aa).

The segment at 39 to 60 adopts a C4-type zinc-finger fold; it reads CSFCGKKTVRRGAAGIWSCHSC.

It belongs to the eukaryotic ribosomal protein eL43 family.

The protein is Large ribosomal subunit protein eL43 (RPL43) of Candida glabrata (strain ATCC 2001 / BCRC 20586 / JCM 3761 / NBRC 0622 / NRRL Y-65 / CBS 138) (Yeast).